We begin with the raw amino-acid sequence, 141 residues long: Nucleoside diphosphate kinase (141 aa).

Lys-11, Phe-59, Arg-87, Thr-93, Arg-104, and Asn-114 together coordinate ATP. Catalysis depends on His-117, which acts as the Pros-phosphohistidine intermediate.

This sequence belongs to the NDK family. Homotetramer. It depends on Mg(2+) as a cofactor.

It localises to the cytoplasm. The catalysed reaction is a 2'-deoxyribonucleoside 5'-diphosphate + ATP = a 2'-deoxyribonucleoside 5'-triphosphate + ADP. The enzyme catalyses a ribonucleoside 5'-diphosphate + ATP = a ribonucleoside 5'-triphosphate + ADP. Its function is as follows. Major role in the synthesis of nucleoside triphosphates other than ATP. The ATP gamma phosphate is transferred to the NDP beta phosphate via a ping-pong mechanism, using a phosphorylated active-site intermediate. The chain is Nucleoside diphosphate kinase from Vibrio parahaemolyticus serotype O3:K6 (strain RIMD 2210633).